Reading from the N-terminus, the 555-residue chain is Glutamate--tRNA ligase (555 aa).

The 'HIGH' region motif lies at 100–110; that stretch reads PNPSGPLHIGH.

It belongs to the class-I aminoacyl-tRNA synthetase family. Glutamate--tRNA ligase type 2 subfamily.

It localises to the cytoplasm. The catalysed reaction is tRNA(Glu) + L-glutamate + ATP = L-glutamyl-tRNA(Glu) + AMP + diphosphate. Catalyzes the attachment of glutamate to tRNA(Glu) in a two-step reaction: glutamate is first activated by ATP to form Glu-AMP and then transferred to the acceptor end of tRNA(Glu). In Methanococcus maripaludis (strain C5 / ATCC BAA-1333), this protein is Glutamate--tRNA ligase.